Here is a 1531-residue protein sequence, read N- to C-terminus: Multidrug resistance-associated protein 1 (1531 aa).

Topologically, residues 1–33 (MALRGFCSADGSDPLWDWNVTWYTSNPDFTKCF) are extracellular. N-linked (GlcNAc...) asparagine glycosylation occurs at Asn-19. A helical transmembrane segment spans residues 34–54 (QNTVLVWVPCFYLWACFPFYF). Residues 55–74 (LYLSRHDRGYIQMTLLNKTK) are Cytoplasmic-facing. A helical membrane pass occupies residues 75–95 (TALGFLLWIVCWADLFYSFWE). Residues 96–100 (RSRGI) lie on the Extracellular side of the membrane. Residues 101 to 121 (FLAPVFLVSPTLLGITMLLAT) traverse the membrane as a helical segment. Residues 122–133 (FLIQLERRKGVQ) lie on the Cytoplasmic side of the membrane. The chain crosses the membrane as a helical span at residues 134 to 154 (SSGIMLTFWLVALLCALAILR). The Extracellular portion of the chain corresponds to 155–172 (SKIMTALKEDVQVDLFRD). The helical transmembrane segment at 173–193 (MTFYVYFSLVLIQLVLSCFSD) threads the bilayer. Topologically, residues 194–316 (RSPLFSETIH…KEWNPSLFKV (123 aa)) are cytoplasmic. Tyr-277 carries the phosphotyrosine modification. Ser-289 carries the phosphoserine modification. The helical transmembrane segment at 317–337 (LYKTFGPYFLMSFFFKAIHDL) threads the bilayer. Positions 325-608 (FLMSFFFKAI…LPMVISSIVQ (284 aa)) constitute an ABC transmembrane type-1 1 domain. Residues 338-363 (MMFSGPEILKLLINFVNDTKAPDWQG) lie on the Extracellular side of the membrane. Residues 364–384 (YFYTALLFVAACLQTLVLHQY) traverse the membrane as a helical segment. Residues 385–440 (FHICFVSGMRIKTAVIGAVYRKALVITNAARKSSTVGEIVNLMSVDAQRFMDLATY) lie on the Cytoplasmic side of the membrane. A helical membrane pass occupies residues 441-461 (INMIWSAPLQVILALYLLWRN). Topologically, residues 462-464 (LGP) are extracellular. The helical transmembrane segment at 465–485 (PILAGVAVMVLMVPVNAVMAM) threads the bilayer. Residues 486-547 (KTKTYQVAHM…VLKKSAYLAA (62 aa)) are Cytoplasmic-facing. Residue Lys-503 is modified to N6-succinyllysine. The helical transmembrane segment at 548 to 568 (VGTFTWVCTPFLVALCTFAVY) threads the bilayer. Residues 569 to 590 (VTIDKNNVLDAQKAFVSLALFN) lie on the Extracellular side of the membrane. A helical membrane pass occupies residues 591–611 (ILRFPLNILPMVISSIVQASV). Residues 612–967 (SLKRLRIFLS…VKLSVYWDYM (356 aa)) lie on the Cytoplasmic side of the membrane. The ABC transporter 1 domain occupies 644-868 (ITVRNATFTW…DGAFAEFLRT (225 aa)). 678-685 (GQVGCGKS) is a binding site for ATP. Residues 871–893 (SAEQEQDPEDNGVTGVSGPGKEA) are disordered. Residues Ser-905, Ser-915, and Ser-930 each carry the phosphoserine modification. Residues 917-938 (SSSYSGDVSRQHNSTAELQKDG) are disordered. Over residues 922–933 (GDVSRQHNSTAE) the composition is skewed to polar residues. Residues 968–988 (KAIGLFISFLSIFLFICNHVA) traverse the membrane as a helical segment. In terms of domain architecture, ABC transmembrane type-1 2 spans 975-1256 (SFLSIFLFIC…LVRMSSEMET (282 aa)). Residues 989-1025 (ALASNYWLSLWTDDPIVNGTQEHTKVRLSVYGALGIS) are Extracellular-facing. Asn-1006 is a glycosylation site (N-linked (GlcNAc...) asparagine). A helical transmembrane segment spans residues 1026 to 1046 (QGIAVFGYSMAVSIGGILASR). The Cytoplasmic segment spans residues 1047 to 1089 (CLHVDLLHSILRSPMSFFERTPSGNLVNRFSKELDTVDSMIPE). The helical transmembrane segment at 1090-1110 (VIKMFMGSLFNVIGACIVILL) threads the bilayer. Ala-1111 is a topological domain (extracellular). Residues 1112 to 1132 (TPIAAIIIPPLGLIYFFVQRF) traverse the membrane as a helical segment. At 1133–1203 (YVASSRQLKR…VANRWLAVRL (71 aa)) the chain is on the cytoplasmic side. Residues 1204–1224 (ECVGNCIVLFAALFAVISRHS) form a helical membrane-spanning segment. The Extracellular segment spans residues 1225–1226 (LS). Residues 1227 to 1247 (AGLVGLSVSYSLQVTTYLNWL) form a helical membrane-spanning segment. Residues 1248-1531 (VRMSSEMETN…YNMARDAGLV (284 aa)) lie on the Cytoplasmic side of the membrane. The ABC transporter 2 domain occupies 1293–1527 (VEFRNYCLRY…RGLFYNMARD (235 aa)). Residue 1327-1334 (GRTGAGKS) coordinates ATP.

It belongs to the ABC transporter superfamily. ABCC family. Conjugate transporter (TC 3.A.1.208) subfamily.

It is found in the cell membrane. The protein resides in the basolateral cell membrane. The enzyme catalyses ATP + H2O + xenobioticSide 1 = ADP + phosphate + xenobioticSide 2.. The catalysed reaction is an S-substituted glutathione(in) + ATP + H2O = an S-substituted glutathione(out) + ADP + phosphate + H(+). It carries out the reaction sphing-4-enine 1-phosphate(in) + ATP + H2O = sphing-4-enine 1-phosphate(out) + ADP + phosphate + H(+). It catalyses the reaction leukotriene C4(in) + ATP + H2O = leukotriene C4(out) + ADP + phosphate + H(+). The enzyme catalyses 17beta-estradiol 17-O-(beta-D-glucuronate)(in) + ATP + H2O = 17beta-estradiol 17-O-(beta-D-glucuronate)(out) + ADP + phosphate + H(+). The catalysed reaction is daunorubicin(in) + ATP + H2O = daunorubicin(out) + ADP + phosphate + H(+). It carries out the reaction vincristine(in) + ATP + H2O = vincristine(out) + ADP + phosphate + H(+). It catalyses the reaction 2',3'-cGAMP(in) + ATP + H2O = 2',3'-cGAMP(out) + ADP + phosphate + H(+). The enzyme catalyses S-[(2E,6E,10E)-geranylgeranyl]-L-glutathione(in) + ATP + H2O = S-[(2E,6E,10E)-geranylgeranyl]-L-glutathione(out) + ADP + phosphate + H(+). The catalysed reaction is prostaglandin A2-S-(R)-glutathione(in) + ATP + H2O = prostaglandin A2-S-(R)-glutathione(out) + ADP + phosphate + H(+). It carries out the reaction prostaglandin A2-S-(S)-glutathione(in) + ATP + H2O = prostaglandin A2-S-(S)-glutathione(out) + ADP + phosphate + H(+). Its activity is regulated as follows. MK 571 inhibits sphingosine 1-phosphate and leukotriene C4 export. In terms of biological role, mediates export of organic anions and drugs from the cytoplasm. Mediates ATP-dependent transport of glutathione and glutathione conjugates, leukotriene C4, estradiol-17-beta-o-glucuronide, methotrexate, antiviral drugs and other xenobiotics. Confers resistance to anticancer drugs by decreasing accumulation of drug in cells, and by mediating ATP- and GSH-dependent drug export. Hydrolyzes ATP with low efficiency. Catalyzes the export of sphingosine 1-phosphate from mast cells independently of their degranulation. Participates in inflammatory response by allowing export of leukotriene C4 from leukotriene C4-synthesizing cells. Mediates ATP-dependent, GSH-independent cyclic GMP-AMP (cGAMP) export. Thus, by limiting intracellular cGAMP concentrations negatively regulates the cGAS-STING pathway. Exports S-geranylgeranyl-glutathione (GGG) in lymphoid cells and stromal compartments of lymphoid organs. ABCC1 (via extracellular transport) with GGT5 (via GGG catabolism) establish GGG gradients within lymphoid tissues to position P2RY8-positive lymphocytes at germinal centers in lymphoid follicles and restrict their chemotactic transmigration from blood vessels to the bone marrow parenchyma. Mediates basolateral export of GSH-conjugated R- and S-prostaglandin A2 diastereomers in polarized epithelial cells. This Macaca fascicularis (Crab-eating macaque) protein is Multidrug resistance-associated protein 1.